Consider the following 402-residue polypeptide: S-adenosylmethionine synthase (402 aa).

G137–D142 is a binding site for ATP.

This sequence belongs to the AdoMet synthase 2 family. It depends on Mg(2+) as a cofactor.

It carries out the reaction L-methionine + ATP + H2O = S-adenosyl-L-methionine + phosphate + diphosphate. It functions in the pathway amino-acid biosynthesis; S-adenosyl-L-methionine biosynthesis; S-adenosyl-L-methionine from L-methionine: step 1/1. In terms of biological role, catalyzes the formation of S-adenosylmethionine from methionine and ATP. The protein is S-adenosylmethionine synthase of Pyrobaculum calidifontis (strain DSM 21063 / JCM 11548 / VA1).